The chain runs to 191 residues: Molybdenum cofactor guanylyltransferase (191 aa).

GTP contacts are provided by residues 13-15 (LAG), lysine 26, aspartate 72, and aspartate 102. Aspartate 102 provides a ligand contact to Mg(2+).

This sequence belongs to the MobA family. As to quaternary structure, monomer. It depends on Mg(2+) as a cofactor.

The protein resides in the cytoplasm. The catalysed reaction is Mo-molybdopterin + GTP + H(+) = Mo-molybdopterin guanine dinucleotide + diphosphate. In terms of biological role, transfers a GMP moiety from GTP to Mo-molybdopterin (Mo-MPT) cofactor (Moco or molybdenum cofactor) to form Mo-molybdopterin guanine dinucleotide (Mo-MGD) cofactor. The protein is Molybdenum cofactor guanylyltransferase of Pseudomonas putida (strain GB-1).